A 200-amino-acid polypeptide reads, in one-letter code: Holliday junction branch migration complex subunit RuvA (200 aa).

The interval 1 to 63 (MIASVRGEVL…EDSMTLYGFP (63 aa)) is domain I. Positions 64 to 142 (DSESKELFGL…AVGSTSGAVP (79 aa)) are domain II. The tract at residues 142-146 (PLGAG) is flexible linker. Positions 147–200 (GGGSVRDQIVEALVGLGFPAKQAEQATDSVLAEAPESTTSSALRSALSLLGKTR) are domain III.

It belongs to the RuvA family. Homotetramer. Forms an RuvA(8)-RuvB(12)-Holliday junction (HJ) complex. HJ DNA is sandwiched between 2 RuvA tetramers; dsDNA enters through RuvA and exits via RuvB. An RuvB hexamer assembles on each DNA strand where it exits the tetramer. Each RuvB hexamer is contacted by two RuvA subunits (via domain III) on 2 adjacent RuvB subunits; this complex drives branch migration. In the full resolvosome a probable DNA-RuvA(4)-RuvB(12)-RuvC(2) complex forms which resolves the HJ.

It is found in the cytoplasm. Functionally, the RuvA-RuvB-RuvC complex processes Holliday junction (HJ) DNA during genetic recombination and DNA repair, while the RuvA-RuvB complex plays an important role in the rescue of blocked DNA replication forks via replication fork reversal (RFR). RuvA specifically binds to HJ cruciform DNA, conferring on it an open structure. The RuvB hexamer acts as an ATP-dependent pump, pulling dsDNA into and through the RuvAB complex. HJ branch migration allows RuvC to scan DNA until it finds its consensus sequence, where it cleaves and resolves the cruciform DNA. This chain is Holliday junction branch migration complex subunit RuvA, found in Rhodococcus opacus (strain B4).